Reading from the N-terminus, the 400-residue chain is Proline-rich protein 5 (400 aa).

The tract at residues 301–358 is disordered; the sequence is TDSTSKLSMAGTKPPGEGERPPISNGQFPPLHNLSDSQQGLYNSQRDSPLLPAPSSSP. The span at 334 to 347 shows a compositional bias: polar residues; sequence LSDSQQGLYNSQRD. A compositionally biased stretch (low complexity) spans 348 to 358; that stretch reads SPLLPAPSSSP.

The protein belongs to the PROTOR family. In terms of assembly, associated component of the mechanistic target of rapamycin complex 2 (mTORC2).

In terms of biological role, associated subunit of mTORC2, which regulates cell growth and survival in response to hormonal signals. The polypeptide is Proline-rich protein 5 (prr5) (Xenopus laevis (African clawed frog)).